The following is a 433-amino-acid chain: Cysteine--tRNA ligase (433 aa).

Position 4 (C4) interacts with Zn(2+). Positions 6 to 16 match the 'HIGH' region motif; the sequence is PTVYDTAHIGN. C188, H213, and E217 together coordinate Zn(2+). The 'KMSKS' region signature appears at 246 to 250; that stretch reads KMSKS. K249 is an ATP binding site.

Belongs to the class-I aminoacyl-tRNA synthetase family. As to quaternary structure, monomer. It depends on Zn(2+) as a cofactor.

The protein resides in the cytoplasm. It carries out the reaction tRNA(Cys) + L-cysteine + ATP = L-cysteinyl-tRNA(Cys) + AMP + diphosphate. This chain is Cysteine--tRNA ligase, found in Wolbachia sp. subsp. Brugia malayi (strain TRS).